A 430-amino-acid polypeptide reads, in one-letter code: Histidine--tRNA ligase (430 aa).

It belongs to the class-II aminoacyl-tRNA synthetase family. In terms of assembly, homodimer.

The protein resides in the cytoplasm. The enzyme catalyses tRNA(His) + L-histidine + ATP = L-histidyl-tRNA(His) + AMP + diphosphate + H(+). This chain is Histidine--tRNA ligase, found in Anaplasma marginale (strain St. Maries).